The following is a 238-amino-acid chain: Group 3 late-embryogenesis abundant protein, mitochondrial (238 aa).

Residues S41–G62 are disordered. The stretch at N50–Q202 forms a coiled coil. 6 LEA 11-mer repeat repeats span residues K64–A74, K89–L99, K140–T150, K151–V161, K179–V189, and K190–A200. Basic and acidic residues-rich tracts occupy residues A182–A200 and D213–S225. The interval A182–N238 is disordered. Residues Q226 to N238 show a composition bias toward low complexity.

Belongs to the LEA type 4 family.

The protein localises to the mitochondrion. In terms of biological role, mitochondrial heat soluble protein acting as a molecular shield in water-deficient condition. The polypeptide is Group 3 late-embryogenesis abundant protein, mitochondrial (Hypsibius exemplaris (Freshwater tardigrade)).